Consider the following 725-residue polypeptide: Probable dipeptidyl-peptidase 5 (725 aa).

The signal sequence occupies residues 1–18 (MGALRWLSIAATASTALA). 6 N-linked (GlcNAc...) asparagine glycosylation sites follow: N75, N96, N153, N258, N383, and N453. S563 functions as the Charge relay system in the catalytic mechanism. N-linked (GlcNAc...) asparagine glycosylation occurs at N610. Catalysis depends on charge relay system residues D646 and H678.

Belongs to the peptidase S9C family.

It localises to the secreted. Its function is as follows. Extracellular dipeptidyl-peptidase which removes N-terminal dipeptides sequentially from polypeptides having unsubstituted N-termini. The sequence is that of Probable dipeptidyl-peptidase 5 (dpp5) from Aspergillus flavus (strain ATCC 200026 / FGSC A1120 / IAM 13836 / NRRL 3357 / JCM 12722 / SRRC 167).